The sequence spans 188 residues: Large ribosomal subunit protein bL35m (188 aa).

It belongs to the bacterial ribosomal protein bL35 family.

The protein resides in the mitochondrion. The polypeptide is Large ribosomal subunit protein bL35m (Mrpl35) (Mus musculus (Mouse)).